A 141-amino-acid polypeptide reads, in one-letter code: Nucleoside diphosphate kinase (141 aa).

Residues lysine 10, phenylalanine 58, arginine 86, threonine 92, arginine 103, and asparagine 113 each contribute to the ATP site. The active-site Pros-phosphohistidine intermediate is histidine 116.

This sequence belongs to the NDK family. In terms of assembly, homotetramer. Requires Mg(2+) as cofactor.

It localises to the cytoplasm. The enzyme catalyses a 2'-deoxyribonucleoside 5'-diphosphate + ATP = a 2'-deoxyribonucleoside 5'-triphosphate + ADP. It carries out the reaction a ribonucleoside 5'-diphosphate + ATP = a ribonucleoside 5'-triphosphate + ADP. Its function is as follows. Major role in the synthesis of nucleoside triphosphates other than ATP. The ATP gamma phosphate is transferred to the NDP beta phosphate via a ping-pong mechanism, using a phosphorylated active-site intermediate. This chain is Nucleoside diphosphate kinase, found in Ehrlichia canis (strain Jake).